The following is a 319-amino-acid chain: Acetyl-coenzyme A carboxylase carboxyl transferase subunit alpha (319 aa).

Residues Asn-35–Asp-296 form the CoA carboxyltransferase C-terminal domain.

Belongs to the AccA family. As to quaternary structure, acetyl-CoA carboxylase is a heterohexamer composed of biotin carboxyl carrier protein (AccB), biotin carboxylase (AccC) and two subunits each of ACCase subunit alpha (AccA) and ACCase subunit beta (AccD).

It is found in the cytoplasm. The enzyme catalyses N(6)-carboxybiotinyl-L-lysyl-[protein] + acetyl-CoA = N(6)-biotinyl-L-lysyl-[protein] + malonyl-CoA. It participates in lipid metabolism; malonyl-CoA biosynthesis; malonyl-CoA from acetyl-CoA: step 1/1. Its function is as follows. Component of the acetyl coenzyme A carboxylase (ACC) complex. First, biotin carboxylase catalyzes the carboxylation of biotin on its carrier protein (BCCP) and then the CO(2) group is transferred by the carboxyltransferase to acetyl-CoA to form malonyl-CoA. The protein is Acetyl-coenzyme A carboxylase carboxyl transferase subunit alpha of Erwinia tasmaniensis (strain DSM 17950 / CFBP 7177 / CIP 109463 / NCPPB 4357 / Et1/99).